A 181-amino-acid chain; its full sequence is Protein Syd (181 aa).

This sequence belongs to the Syd family.

The protein localises to the cell inner membrane. Its function is as follows. Interacts with the SecY protein in vivo. May bind preferentially to an uncomplexed state of SecY, thus functioning either as a chelating agent for excess SecY in the cell or as a regulatory factor that negatively controls the translocase function. The sequence is that of Protein Syd from Escherichia coli (strain K12 / DH10B).